A 685-amino-acid polypeptide reads, in one-letter code: Putative pentatricopeptide repeat-containing protein At3g08820 (685 aa).

PPR repeat units lie at residues Asn75–Leu109, His110–His144, Asp145–Arg175, Ser176–Pro210, Asp211–Lys245, Asn246–Lys276, Asp277–Pro311, Asp312–Thr346, Asn347–Ile381, Asn383–Pro412, Asp413–Val443, and Thr449–Arg479. The segment at Val484 to Glu559 is type E motif. The tract at residues Gly560–Arg590 is type E(+) motif. The tract at residues Leu591–Trp685 is type DYW motif.

The protein belongs to the PPR family. PCMP-H subfamily.

In Arabidopsis thaliana (Mouse-ear cress), this protein is Putative pentatricopeptide repeat-containing protein At3g08820 (PCMP-H84).